Consider the following 252-residue polypeptide: Chitooligosaccharide deacetylase (252 aa).

The Mg(2+) site is built by His61 and His125.

It belongs to the YdjC deacetylase family. ChbG subfamily. Homodimer. Requires Mg(2+) as cofactor.

Its subcellular location is the cytoplasm. The enzyme catalyses N,N'-diacetylchitobiose + H2O = N-acetyl-beta-D-glucosaminyl-(1-&gt;4)-D-glucosamine + acetate. It catalyses the reaction diacetylchitobiose-6'-phosphate + H2O = N'-monoacetylchitobiose-6'-phosphate + acetate. It participates in glycan degradation; chitin degradation. Functionally, involved in the degradation of chitin. ChbG is essential for growth on the acetylated chitooligosaccharides chitobiose and chitotriose but is dispensable for growth on cellobiose and chitosan dimer, the deacetylated form of chitobiose. Deacetylation of chitobiose-6-P and chitotriose-6-P is necessary for both the activation of the chb promoter by the regulatory protein ChbR and the hydrolysis of phosphorylated beta-glucosides by the phospho-beta-glucosidase ChbF. Catalyzes the removal of only one acetyl group from chitobiose-6-P to yield monoacetylchitobiose-6-P, the inducer of ChbR and the substrate of ChbF. This is Chitooligosaccharide deacetylase from Salmonella dublin (strain CT_02021853).